The primary structure comprises 321 residues: Protein-L-isoaspartate O-methyltransferase (321 aa).

The span at 21–31 (KPAERQREKRI) shows a compositional bias: basic and acidic residues. A disordered region spans residues 21–65 (KPAERQREKRISSGVNAVSLPTPARTASAERASSTPAPGPGPQRV). Over residues 41 to 56 (PTPARTASAERASSTP) the composition is skewed to low complexity. Ser-153 is an active-site residue.

The protein belongs to the methyltransferase superfamily. L-isoaspartyl/D-aspartyl protein methyltransferase family.

Its subcellular location is the cytoplasm. The catalysed reaction is [protein]-L-isoaspartate + S-adenosyl-L-methionine = [protein]-L-isoaspartate alpha-methyl ester + S-adenosyl-L-homocysteine. Its function is as follows. Catalyzes the methyl esterification of L-isoaspartyl residues in peptides and proteins that result from spontaneous decomposition of normal L-aspartyl and L-asparaginyl residues. It plays a role in the repair and/or degradation of damaged proteins. This chain is Protein-L-isoaspartate O-methyltransferase, found in Ralstonia nicotianae (strain ATCC BAA-1114 / GMI1000) (Ralstonia solanacearum).